The sequence spans 449 residues: Acetolactate synthase small subunit 1, chloroplastic (449 aa).

The N-terminal 30 residues, 1–30 (MEHIQTRTTLSQLSTLPSDKRLGAIRFKCL), are a transit peptide targeting the chloroplast. ACT domains follow at residues 31 to 98 (LVMK…DLSK) and 259 to 333 (TLSM…DITH).

It belongs to the acetolactate synthase small subunit family. The acetolactate synthase complex contains both large catalytic subunits and small regulatory subunits.

Its subcellular location is the plastid. The protein localises to the chloroplast. Its pathway is amino-acid biosynthesis; L-isoleucine biosynthesis; L-isoleucine from 2-oxobutanoate: step 1/4. It participates in amino-acid biosynthesis; L-valine biosynthesis; L-valine from pyruvate: step 1/4. Functionally, regulatory subunit of acetohydroxy-acid synthase. Probably involved in feedback inhibition by branched-chain amino acids. Not involved in herbicide tolerance. The chain is Acetolactate synthase small subunit 1, chloroplastic from Nicotiana plumbaginifolia (Leadwort-leaved tobacco).